A 280-amino-acid chain; its full sequence is 4-deoxy-L-threo-5-hexosulose-uronate ketol-isomerase 1 (280 aa).

Zn(2+) is bound by residues His-198, His-200, Glu-205, and His-247.

It belongs to the KduI family. The cofactor is Zn(2+).

It catalyses the reaction 5-dehydro-4-deoxy-D-glucuronate = 3-deoxy-D-glycero-2,5-hexodiulosonate. It functions in the pathway glycan metabolism; pectin degradation; 2-dehydro-3-deoxy-D-gluconate from pectin: step 4/5. Functionally, catalyzes the isomerization of 5-dehydro-4-deoxy-D-glucuronate to 3-deoxy-D-glycero-2,5-hexodiulosonate. The chain is 4-deoxy-L-threo-5-hexosulose-uronate ketol-isomerase 1 (kduI1) from Bacteroides thetaiotaomicron (strain ATCC 29148 / DSM 2079 / JCM 5827 / CCUG 10774 / NCTC 10582 / VPI-5482 / E50).